Reading from the N-terminus, the 353-residue chain is UPF0283 membrane protein YcjF (353 aa).

Basic and acidic residues predominate over residues 1 to 19 (MSEPLKPRIDFAEPLKEEP). A disordered region spans residues 1-35 (MSEPLKPRIDFAEPLKEEPTSAFKAQQTFSEAESR). 3 consecutive transmembrane segments (helical) span residues 70–90 (MVMGGLALFGASVVGQGLQWT), 100–120 (VALGGCAAGALIIGAGVGSVV), and 213–233 (ESTLMIAVSPLALVDMAFIAW).

It belongs to the UPF0283 family.

The protein resides in the cell inner membrane. This chain is UPF0283 membrane protein YcjF, found in Salmonella choleraesuis (strain SC-B67).